Consider the following 233-residue polypeptide: Large ribosomal subunit protein bL19c (233 aa).

A chloroplast-targeting transit peptide spans 1–77; the sequence is MASKVLPQAL…FPARNSFVVR (77 aa).

As to quaternary structure, component of the chloroplast large ribosomal subunit (LSU). Mature 70S chloroplast ribosomes of higher plants consist of a small (30S) and a large (50S) subunit. The 30S small subunit contains 1 molecule of ribosomal RNA (16S rRNA) and 24 different proteins. The 50S large subunit contains 3 rRNA molecules (23S, 5S and 4.5S rRNA) and 33 different proteins.

Its subcellular location is the plastid. The protein resides in the chloroplast. Component of the chloroplast ribosome (chloro-ribosome), a dedicated translation machinery responsible for the synthesis of chloroplast genome-encoded proteins, including proteins of the transcription and translation machinery and components of the photosynthetic apparatus. In Spinacia oleracea (Spinach), this protein is Large ribosomal subunit protein bL19c (RPL19).